The primary structure comprises 805 residues: Acetyl-CoA decarbonylase/synthase complex subunit alpha 3 (805 aa).

[4Fe-4S] cluster-binding residues include Cys72, Cys75, Cys76, Cys78, Cys83, and Cys93. His116 is a CO binding site. [Ni-4Fe-4S] cluster is bound by residues His249, Cys277, and Cys322. 4Fe-4S ferredoxin-type domains follow at residues 407–435 (EEFK…IPEA) and 445–474 (EYLE…LNVL). 8 residues coordinate [4Fe-4S] cluster: Cys416, Cys419, Cys422, Cys426, Cys454, Cys457, Cys460, and Cys464. Positions 522, 551, and 586 each coordinate [Ni-4Fe-4S] cluster.

It belongs to the Ni-containing carbon monoxide dehydrogenase family. Heterotetramer of two alpha and two epsilon subunits. The ACDS complex is made up of alpha, epsilon, beta, gamma and delta subunits with a probable stoichiometry of (alpha(2)epsilon(2))(4)-beta(8)-(gamma(1)delta(1))(8). Requires [4Fe-4S] cluster as cofactor. [Ni-4Fe-4S] cluster is required as a cofactor.

It catalyses the reaction CO + 2 oxidized [2Fe-2S]-[ferredoxin] + H2O = 2 reduced [2Fe-2S]-[ferredoxin] + CO2 + 2 H(+). It participates in one-carbon metabolism; methanogenesis from acetate. Part of the ACDS complex that catalyzes the reversible cleavage of acetyl-CoA, allowing growth on acetate as sole source of carbon and energy. The alpha-epsilon subcomponent functions as a carbon monoxide dehydrogenase. The sequence is that of Acetyl-CoA decarbonylase/synthase complex subunit alpha 3 from Methanosarcina acetivorans (strain ATCC 35395 / DSM 2834 / JCM 12185 / C2A).